A 255-amino-acid chain; its full sequence is Adenosylcobinamide-GDP ribazoletransferase (255 aa).

Helical transmembrane passes span 24-44 (LIAYVPLVALFDAALAASLYV), 45-65 (AIYGISKLLASFISVSAIYIV), 98-118 (VGAGGVFTLIFVYLLALISLS), 122-142 (LYIGIFSIILAEFLSKSMMMI), 164-184 (KHDSLYTVEFVVIPIVLALLS), and 187-207 (SIMISVALAFLIFIIVKMAVI).

This sequence belongs to the CobS family. It depends on Mg(2+) as a cofactor.

It localises to the cell membrane. It carries out the reaction alpha-ribazole + adenosylcob(III)inamide-GDP = adenosylcob(III)alamin + GMP + H(+). The enzyme catalyses alpha-ribazole 5'-phosphate + adenosylcob(III)inamide-GDP = adenosylcob(III)alamin 5'-phosphate + GMP + H(+). It participates in cofactor biosynthesis; adenosylcobalamin biosynthesis; adenosylcobalamin from cob(II)yrinate a,c-diamide: step 7/7. Joins adenosylcobinamide-GDP and alpha-ribazole to generate adenosylcobalamin (Ado-cobalamin). Also synthesizes adenosylcobalamin 5'-phosphate from adenosylcobinamide-GDP and alpha-ribazole 5'-phosphate. The sequence is that of Adenosylcobinamide-GDP ribazoletransferase from Thermoplasma acidophilum (strain ATCC 25905 / DSM 1728 / JCM 9062 / NBRC 15155 / AMRC-C165).